We begin with the raw amino-acid sequence, 345 residues long: Ferrochelatase (345 aa).

Fe cation-binding residues include H215 and E296.

This sequence belongs to the ferrochelatase family.

Its subcellular location is the cytoplasm. It catalyses the reaction heme b + 2 H(+) = protoporphyrin IX + Fe(2+). It participates in porphyrin-containing compound metabolism; protoheme biosynthesis; protoheme from protoporphyrin-IX: step 1/1. Catalyzes the ferrous insertion into protoporphyrin IX. In Rhodopseudomonas palustris (strain ATCC BAA-98 / CGA009), this protein is Ferrochelatase.